A 36-amino-acid chain; its full sequence is Tddefensin (36 aa).

3 cysteine pairs are disulfide-bonded: C3–C24, C10–C32, and C14–C34.

This sequence belongs to the invertebrate defensin family. As to expression, expressed by the venom gland.

The protein localises to the secreted. Functionally, antibacterial peptide mostly active against Gram-positive bacteria. The polypeptide is Tddefensin (Tityus discrepans (Venezuelan scorpion)).